A 221-amino-acid polypeptide reads, in one-letter code: GTP-binding nuclear protein Ran-1 (221 aa).

The Small GTPase Ran-type domain maps to D10–D174. D21–T28 is a GTP binding site. Residues K40–V48 are switch-I. GTP contacts are provided by residues G71, N125–D128, and S153–K155. Residues G71–Q87 form a switch-II region.

It belongs to the small GTPase superfamily. Ran family. Found in a nuclear export complex with RanGTP, exportin and pre-miRNA. Interacts with RANBP1A and RANBP1B. Interacts with TRN1. Interacts with ATX1. Interacts with KPNB1. Binds to XPO1. Interacts with MOS14. Binds to NTF2B.

It localises to the nucleus. Functionally, GTP-binding protein involved in nucleocytoplasmic transport. Required for the import of protein into the nucleus and also for RNA export. Involved in chromatin condensation and control of cell cycle. This is GTP-binding nuclear protein Ran-1 (RAN1) from Arabidopsis thaliana (Mouse-ear cress).